A 166-amino-acid chain; its full sequence is Apoptosis regulator M11L (166 aa).

The chain crosses the membrane as a helical span at residues 138–160 (SGGCKISVYLTAAVVGFVAYGIL).

As to quaternary structure, interacts with host BAX; this interaction inhibits apoptosis activation. Interacts with host BAK1.

It is found in the host mitochondrion. It localises to the host membrane. In terms of biological role, plays a role in the inhibition of mitochondria-mediated apoptosis by blocking the activation of mitochondria-tranlocalized BAX thereby maintaining pro-apoptotic BAX in an inactive conformation. Also inhibits apoptosis in a BAX-independent manner by interacting with and inhibiting host BAK1. This chain is Apoptosis regulator M11L (m011L), found in Myxoma virus (strain Lausanne) (MYXV).